The chain runs to 241 residues: Platelet-derived growth factor subunit B (241 aa).

A signal peptide spans 1–20; sequence MNRCWALFLSLCCYLRLVSA. Positions 21 to 81 are cleaved as a propeptide — removed in mature form; the sequence is EGDPIPEELY…ELESLSRGRR (61 aa). Asparagine 63 is a glycosylation site (N-linked (GlcNAc...) asparagine). Cystine bridges form between cysteine 97–cysteine 141, cysteine 130–cysteine 178, and cysteine 134–cysteine 180. A propeptide spans 191–241 (removed in mature form); the sequence is TPGSSQEQRAARTPQTRVTIRTVRVRRPPKGKHRKFKHTHDKTALKETLGA. Over residues 217-230 the composition is skewed to basic residues; that stretch reads RPPKGKHRKFKHTH. The tract at residues 217–241 is disordered; that stretch reads RPPKGKHRKFKHTHDKTALKETLGA.

This sequence belongs to the PDGF/VEGF growth factor family. As to quaternary structure, antiparallel homodimer; disulfide-linked. Antiparallel heterodimer with PDGFA; disulfide-linked. The PDGFB homodimer interacts with PDGFRA and PDGFRB homodimers, and with heterodimers formed by PDGFRA and PDGFRB. The heterodimer composed of PDGFA and PDGFB interacts with PDGFRB homodimers, and with heterodimers formed by PDGFRA and PDGFRB. Interacts with XLKD1. Interacts with LRP1. Interacts with SORL1 (via the N-terminal ectodomain). Interacts with CD82; this interaction inhibits PDGFB-mediated signaling pathway.

The protein resides in the secreted. Growth factor that plays an essential role in the regulation of embryonic development, cell proliferation, cell migration, survival and chemotaxis. Potent mitogen for cells of mesenchymal origin. Required for normal proliferation and recruitment of pericytes and vascular smooth muscle cells in the central nervous system, skin, lung, heart and placenta. Required for normal blood vessel development, and for normal development of kidney glomeruli. Plays an important role in wound healing. Signaling is modulated by the formation of heterodimers with PDGFA. The protein is Platelet-derived growth factor subunit B (PDGFB) of Ovis aries (Sheep).